The sequence spans 177 residues: MPIKSRIRTIPDYPKKGIMFRDITTLLKDPVGFRLVIDQITQHYLENGINFDMIIGMEARGFIIGGALSYTLGKGFVPIRKPGKLPGETVNQEYQLEYGTDKVEMHIDALEKGTRVLLVDDLLATGGTALAGAALIEKVGGVVADMAFIVNLPDIGGQKKLEEKGYSLFSLTEFEGD.

The protein belongs to the purine/pyrimidine phosphoribosyltransferase family. As to quaternary structure, homodimer.

Its subcellular location is the cytoplasm. The catalysed reaction is AMP + diphosphate = 5-phospho-alpha-D-ribose 1-diphosphate + adenine. Its pathway is purine metabolism; AMP biosynthesis via salvage pathway; AMP from adenine: step 1/1. Functionally, catalyzes a salvage reaction resulting in the formation of AMP, that is energically less costly than de novo synthesis. The polypeptide is Adenine phosphoribosyltransferase (Prosthecochloris aestuarii (strain DSM 271 / SK 413)).